Here is a 254-residue protein sequence, read N- to C-terminus: Protein orai-2 (254 aa).

4 helical membrane-spanning segments follow: residues 66–83 (TSAL…EVQL), 94–114 (LIAF…ALLI), 148–168 (LAWG…VVLL), and 196–216 (AALV…VFTI).

Belongs to the Orai family. In terms of assembly, oligomerizes in homomeric and heteromeric ORAI complexes. Native CRAC channels most likely consist of hexameric ORAI heteromers, implying that diverse ORAI1, ORAI2 and ORAI3 subunit combinations with distinct biophysical properties can operate in a cell-type specific way. Interacts with STIM1; this regulates channel activity. Interacts with CRACR2A/EFCAB4B.

The protein resides in the cell membrane. The enzyme catalyses Ca(2+)(in) = Ca(2+)(out). CRAC channels are regulated by fast Ca(2+)-dependent inactivation (FCDI), a mechanism that limits Ca(2+) influx and cell toxicity. ORAI2 channels display prominent FCDI. Inhibited by lanthanides such as Gd(3+) ions. Functionally, pore-forming subunit of inward rectifying Ca(2+) release-activated Ca(2+) (CRAC) channels. Assembles with ORAI1 and ORAI3 to form hexameric CRAC channels that mediate Ca(2+) influx upon depletion of endoplasmic reticulum Ca(2+) store and channel activation by Ca(2+) sensor STIM1, a process known as store-operated Ca(2+) entry (SOCE). Various pore subunit combinations may account for distinct CRAC channel spatiotemporal and cell-type specific dynamics. ORAI1 mainly contributes to the generation of Ca(2+) plateaus involved in sustained Ca(2+) entry and is dispensable for cytosolic Ca(2+) oscillations, whereas ORAI2 and ORAI3 generate oscillatory patterns. CRAC channels assemble in Ca(2+) signaling microdomains where Ca(2+) influx is coupled to calmodulin and calcineurin signaling and activation of NFAT transcription factors recruited to ORAI1 via AKAP5. CRAC channels are the main pathway for Ca(2+) influx in T cells and promote the immune response to pathogens by activating NFAT-dependent cytokine and chemokine transcription. In Homo sapiens (Human), this protein is Protein orai-2 (ORAI2).